The sequence spans 314 residues: tRNA uridine(34) hydroxylase (314 aa).

Residues 140–234 (ARDDVILIDT…YLEETPPDES (95 aa)) enclose the Rhodanese domain. The active-site Cysteine persulfide intermediate is C194.

This sequence belongs to the TrhO family.

The catalysed reaction is uridine(34) in tRNA + AH2 + O2 = 5-hydroxyuridine(34) in tRNA + A + H2O. Catalyzes oxygen-dependent 5-hydroxyuridine (ho5U) modification at position 34 in tRNAs. This Acinetobacter baumannii (strain SDF) protein is tRNA uridine(34) hydroxylase.